Consider the following 422-residue polypeptide: UDP-N-acetylmuramoylalanine--D-glutamate ligase (422 aa).

Residue 102–108 (GTNGKTT) participates in ATP binding.

Belongs to the MurCDEF family.

The protein resides in the cytoplasm. It catalyses the reaction UDP-N-acetyl-alpha-D-muramoyl-L-alanine + D-glutamate + ATP = UDP-N-acetyl-alpha-D-muramoyl-L-alanyl-D-glutamate + ADP + phosphate + H(+). The protein operates within cell wall biogenesis; peptidoglycan biosynthesis. Its function is as follows. Cell wall formation. Catalyzes the addition of glutamate to the nucleotide precursor UDP-N-acetylmuramoyl-L-alanine (UMA). This is UDP-N-acetylmuramoylalanine--D-glutamate ligase from Helicobacter pylori (strain ATCC 700392 / 26695) (Campylobacter pylori).